A 231-amino-acid chain; its full sequence is Large ribosomal subunit protein uL1 (231 aa).

The protein belongs to the universal ribosomal protein uL1 family. As to quaternary structure, part of the 50S ribosomal subunit.

Functionally, binds directly to 23S rRNA. The L1 stalk is quite mobile in the ribosome, and is involved in E site tRNA release. Its function is as follows. Protein L1 is also a translational repressor protein, it controls the translation of the L11 operon by binding to its mRNA. In Halalkalibacterium halodurans (strain ATCC BAA-125 / DSM 18197 / FERM 7344 / JCM 9153 / C-125) (Bacillus halodurans), this protein is Large ribosomal subunit protein uL1.